The primary structure comprises 107 residues: Iron-binding protein IscA (107 aa).

Positions 35, 99, and 101 each coordinate Fe cation.

Belongs to the HesB/IscA family. As to quaternary structure, homodimer; may form tetramers and higher multimers. The cofactor is Fe cation.

Is able to transfer iron-sulfur clusters to apo-ferredoxin. Multiple cycles of [2Fe2S] cluster formation and transfer are observed, suggesting that IscA acts catalytically. Recruits intracellular free iron so as to provide iron for the assembly of transient iron-sulfur cluster in IscU in the presence of IscS, L-cysteine and the thioredoxin reductase system TrxA/TrxB. In Pectobacterium carotovorum subsp. carotovorum (strain PC1), this protein is Iron-binding protein IscA.